The following is a 316-amino-acid chain: Spermidine synthase (316 aa).

One can recognise a PABS domain in the interval 25 to 262 (PGWFSEISPM…GVIGFMLCST (238 aa)). Residue glutamine 56 coordinates S-adenosyl 3-(methylsulfanyl)propylamine. Tyrosine 86 contributes to the putrescine binding site. S-adenosyl 3-(methylsulfanyl)propylamine is bound by residues glutamine 87, aspartate 111, glutamate 131, 162 to 163 (DG), and aspartate 181. Aspartate 181 (proton acceptor) is an active-site residue. Putrescine contacts are provided by residues 181–184 (DSSD) and tyrosine 250.

It belongs to the spermidine/spermine synthase family.

It carries out the reaction S-adenosyl 3-(methylsulfanyl)propylamine + putrescine = S-methyl-5'-thioadenosine + spermidine + H(+). The protein operates within amine and polyamine biosynthesis; spermidine biosynthesis; spermidine from putrescine: step 1/1. The chain is Spermidine synthase from Coffea arabica (Arabian coffee).